Here is a 588-residue protein sequence, read N- to C-terminus: ustiloxin B cluster transcription factor ustR (588 aa).

A DNA-binding region (zn(2)-C6 fungal-type) is located at residues 11 to 38 (CWTCRLRRKKCNEDGQPCSNCEARGVFC). The interval 68–92 (RTRRARATPTNSINGEPRRPSIDMN) is disordered.

It is found in the nucleus. Its function is as follows. Transcription factor that regulates the expression of the gene cluster that mediates the biosynthesis of ustiloxin B, an antimitotic tetrapeptide. This Aspergillus flavus (strain ATCC 200026 / FGSC A1120 / IAM 13836 / NRRL 3357 / JCM 12722 / SRRC 167) protein is ustiloxin B cluster transcription factor ustR.